We begin with the raw amino-acid sequence, 182 residues long: UPF0397 protein SPP_0507 (182 aa).

The next 5 membrane-spanning stretches (helical) occupy residues 10-30 (VVAV…NIPT), 46-66 (LLSI…GHAI), 73-93 (YGLW…VGLF), 109-129 (ILIF…VLAP), and 148-168 (IVAG…LLLA).

It belongs to the UPF0397 family.

Its subcellular location is the cell membrane. This Streptococcus pneumoniae (strain P1031) protein is UPF0397 protein SPP_0507.